Consider the following 93-residue polypeptide: Large ribosomal subunit protein bL27 (93 aa).

Positions 1–8 (MIMDLQFF) are excised as a propeptide. The segment at 8–29 (FSHHKGGGSTANGRNSAGRRLG) is disordered.

The protein belongs to the bacterial ribosomal protein bL27 family. Post-translationally, the N-terminus is cleaved by ribosomal processing cysteine protease Prp.

This is Large ribosomal subunit protein bL27 from Limosilactobacillus reuteri (strain DSM 20016) (Lactobacillus reuteri).